Here is a 70-residue protein sequence, read N- to C-terminus: Translational regulator CsrA (70 aa).

Belongs to the CsrA/RsmA family. In terms of assembly, homodimer; the beta-strands of each monomer intercalate to form a hydrophobic core, while the alpha-helices form wings that extend away from the core.

Its subcellular location is the cytoplasm. Functionally, a key translational regulator that binds mRNA to regulate translation initiation and/or mRNA stability. Mediates global changes in gene expression, shifting from rapid growth to stress survival by linking envelope stress, the stringent response and the catabolite repression systems. Usually binds in the 5'-UTR; binding at or near the Shine-Dalgarno sequence prevents ribosome-binding, repressing translation, binding elsewhere in the 5'-UTR can activate translation and/or stabilize the mRNA. Its function is antagonized by small RNA(s). This Hydrogenovibrio crunogenus (strain DSM 25203 / XCL-2) (Thiomicrospira crunogena) protein is Translational regulator CsrA.